A 356-amino-acid polypeptide reads, in one-letter code: Nitrilase, arylacetone-specific (356 aa).

In terms of domain architecture, CN hydrolase spans 7–280; sequence VRAAAVQAAS…EGLIIADLNM (274 aa). Glu47 functions as the Proton acceptor in the catalytic mechanism. The Proton donor role is filled by Lys129. The active-site Nucleophile is the Cys163. A disordered region spans residues 324–356; the sequence is QEEAPEPHVQSTAAPVAVSQTQDSDTLLVQEPS. The segment covering 332-356 has biased composition (polar residues); that stretch reads VQSTAAPVAVSQTQDSDTLLVQEPS.

It belongs to the carbon-nitrogen hydrolase superfamily. Nitrilase family. In terms of assembly, homohexamer.

The catalysed reaction is a nitrile + 2 H2O = a carboxylate + NH4(+). Its function is as follows. Nitrilase that acts mostly on arylacetonitriles. In Alcaligenes faecalis, this protein is Nitrilase, arylacetone-specific.